The chain runs to 97 residues: uncharacterized protein (97 aa).

This is an uncharacterized protein from Bacillus subtilis (strain 168).